Here is a 353-residue protein sequence, read N- to C-terminus: MTITVAVDCMGGDHGPHVTVPATVSYLQSNPAIDVVLVGLPDVIESELRALGYTQSPRLRIHAASEVVGMDESPATALRGKKNSSMRVALNLVKSGEAQACVSAGNTGALLATSRFVLKTLPGIDRPALAVVLPTMRGHTYVLDLGANVDCTAEHLLQFGVMGATLVSSIENKEKPSIGLLNIGEEEIKGNDVVKRAAELLRDSGLNFYGNIEGNDIYKGTTDVVVCDGFVGNVALKTSEGVAQMLSHYLREEFRRNLLTKLAGLIALPVISAFKRRVDHRRYNGASLLGLRGIVIKSHGSADRRAFGFAIARAVDEVRGGMLRHISERVAQLSHQSMQSSSYRRSLPEESPV.

It belongs to the PlsX family. As to quaternary structure, homodimer. Probably interacts with PlsY.

It localises to the cytoplasm. It carries out the reaction a fatty acyl-[ACP] + phosphate = an acyl phosphate + holo-[ACP]. It functions in the pathway lipid metabolism; phospholipid metabolism. Its function is as follows. Catalyzes the reversible formation of acyl-phosphate (acyl-PO(4)) from acyl-[acyl-carrier-protein] (acyl-ACP). This enzyme utilizes acyl-ACP as fatty acyl donor, but not acyl-CoA. The protein is Phosphate acyltransferase of Nitrosospira multiformis (strain ATCC 25196 / NCIMB 11849 / C 71).